The chain runs to 1024 residues: SAC3 family protein 1 (1024 aa).

The interval 1-62 (MEKRNETGNN…QDSRQKRFSS (62 aa)) is disordered. Over residues 11-21 (RLKRSNNRGKS) the composition is skewed to basic residues. The segment covering 22–38 (KKDWKDASVETTPRETS) has biased composition (basic and acidic residues). The segment covering 39 to 52 (VDEDNTSVFEDVEA) has biased composition (acidic residues). The region spanning 243–433 (EVEQLRKGIL…NKTAFFNDSK (191 aa)) is the PCI domain. S841 is modified (phosphoserine). Residues 945 to 1022 (AQLEELEVVR…ARDLLKKVET (78 aa)) adopt a coiled-coil conformation.

This sequence belongs to the SAC3 family.

The protein resides in the cytoplasm. It localises to the nucleus envelope. This chain is SAC3 family protein 1, found in Schizosaccharomyces pombe (strain 972 / ATCC 24843) (Fission yeast).